The primary structure comprises 111 residues: Universal stress protein B (111 aa).

2 consecutive transmembrane segments (helical) span residues 1–21 (MIST…NMAR) and 90–110 (FILT…LMIW).

It belongs to the universal stress protein B family.

The protein localises to the cell inner membrane. This Escherichia coli O45:K1 (strain S88 / ExPEC) protein is Universal stress protein B.